A 515-amino-acid polypeptide reads, in one-letter code: 1-pyrroline-5-carboxylate dehydrogenase 2 (515 aa).

Active-site residues include Glu286 and Cys320.

Belongs to the aldehyde dehydrogenase family. RocA subfamily.

The enzyme catalyses L-glutamate 5-semialdehyde + NAD(+) + H2O = L-glutamate + NADH + 2 H(+). Its pathway is amino-acid degradation; L-proline degradation into L-glutamate; L-glutamate from L-proline: step 2/2. Functionally, important for the use of proline as a sole carbon and energy source or a sole nitrogen source. In Bacillus subtilis (strain 168), this protein is 1-pyrroline-5-carboxylate dehydrogenase 2.